Here is a 443-residue protein sequence, read N- to C-terminus: Protein IQ-DOMAIN 11 (443 aa).

The calmodulin-binding stretch occupies residues 5–20 (KGLFTVLKRIFISEVN). Short sequence motifs (nuclear localization signal) lie at residues 11-18 (LKRIFISE) and 27-34 (RRKWTFWK). Residues 44-65 (ITAPPEHRTSHESHEEQKEEIV) are disordered. Residues 48-64 (PEHRTSHESHEEQKEEI) show a composition bias toward basic and acidic residues. 2 IQ domains span residues 113-138 (AATR…GIVK) and 139-161 (LQAY…CLQS). A compositionally biased stretch (basic and acidic residues) spans 277–293 (FSSKTKPKDETLNEKQL). The segment at 277–361 (FSSKTKPKDE…PRSFDTQSES (85 aa)) is disordered.

It belongs to the IQD family. In terms of assembly, binds to multiple calmodulin (CaM) in the presence of Ca(2+) and CaM-like proteins. Expressed in hypocotyls, cotyledons, leaves and petioles.

It is found in the nucleus. It localises to the cytoplasm. Its subcellular location is the cytoskeleton. In terms of biological role, may be involved in cooperative interactions with calmodulins or calmodulin-like proteins. Recruits calmodulin proteins to microtubules, thus being a potential scaffold in cellular signaling and trafficking. Regulates cell shape and elongation in aerial organs (i.e. epidermis pavement cells) probably by regulating cortical microtubules (MT) arrays orientation. May associate with nucleic acids and regulate gene expression at the transcriptional or post-transcriptional level. The polypeptide is Protein IQ-DOMAIN 11 (Arabidopsis thaliana (Mouse-ear cress)).